The sequence spans 441 residues: Insulinoma-associated protein 1 (441 aa).

The segment covering 1-12 has biased composition (basic residues); that stretch reads MPKGFLVKRSRK. An SNAG domain region spans residues 1-20; that stretch reads MPKGFLVKRSRKSPPVSYRV. Disordered stretches follow at residues 1–31, 43–189, 205–224, and 278–316; these read MPKG…GESL, TGGA…KAIR, LKIK…SSGP, and RWHK…EDGL. Positions 19 to 28 are enriched in basic and acidic residues; the sequence is RVREEEEPRG. A compositionally biased stretch (polar residues) spans 74-83; the sequence is NPDTVQQALY. Positions 89–98 are enriched in basic and acidic residues; sequence VSREQRERKY. 2 stretches are compositionally biased toward low complexity: residues 138–147 and 169–180; these read VSSSSSVSRS and GATSSSAPSKPP. The segment at 258–280 adopts a C2H2-type 1 zinc-finger fold; the sequence is YRCPECHKVFSCPANLASHRRWH. Residues 292-302 show a composition bias toward basic and acidic residues; that stretch reads AKEEPLSDRDT. C2H2-type zinc fingers lie at residues 317–339, 372–395, and 400–423; these read YECP…LLSH, HPCP…RLLH, and YPCK…NKCH.

The protein belongs to the INSM1 family.

It localises to the nucleus. May act as a transcriptional regulator. Plays a role in noradrenergic neuron, pancreatic and gastrointestinal endocrine cells differentiation during embryonic development. This is Insulinoma-associated protein 1 (insm1) from Xenopus tropicalis (Western clawed frog).